Here is a 237-residue protein sequence, read N- to C-terminus: Ribosomal RNA small subunit methyltransferase G (237 aa).

S-adenosyl-L-methionine is bound by residues Gly78, Phe83, 129–130 (AE), and Arg148.

It belongs to the methyltransferase superfamily. RNA methyltransferase RsmG family.

It is found in the cytoplasm. Its function is as follows. Specifically methylates the N7 position of a guanine in 16S rRNA. The sequence is that of Ribosomal RNA small subunit methyltransferase G from Streptococcus equi subsp. zooepidemicus (strain H70).